The sequence spans 391 residues: Protein ABCI12, chloroplastic (391 aa).

A chloroplast-targeting transit peptide spans 1 to 63 (MNHSNLANPT…LAAKRVFIVR (63 aa)). The next 5 helical transmembrane spans lie at 134 to 154 (ANLV…ILVL), 168 to 188 (LLSG…PPML), 229 to 249 (VGST…ICLA), 263 to 283 (FLFP…TLLL), and 370 to 390 (FASV…EYFL).

The protein localises to the plastid. It is found in the chloroplast. It localises to the membrane. In Arabidopsis thaliana (Mouse-ear cress), this protein is Protein ABCI12, chloroplastic (ABCI12).